Here is an 82-residue protein sequence, read N- to C-terminus: Small ribosomal subunit protein bS16c (82 aa).

The protein belongs to the bacterial ribosomal protein bS16 family.

The protein localises to the plastid. Its subcellular location is the chloroplast. This Porphyra purpurea (Red seaweed) protein is Small ribosomal subunit protein bS16c.